A 188-amino-acid polypeptide reads, in one-letter code: Pyridoxal 5'-phosphate synthase subunit PdxT (188 aa).

47–49 (GES) contributes to the L-glutamine binding site. C79 functions as the Nucleophile in the catalytic mechanism. L-glutamine contacts are provided by residues R105 and 134-135 (IR). Catalysis depends on charge relay system residues H170 and E172.

The protein belongs to the glutaminase PdxT/SNO family. In the presence of PdxS, forms a dodecamer of heterodimers. Only shows activity in the heterodimer.

It carries out the reaction aldehydo-D-ribose 5-phosphate + D-glyceraldehyde 3-phosphate + L-glutamine = pyridoxal 5'-phosphate + L-glutamate + phosphate + 3 H2O + H(+). The catalysed reaction is L-glutamine + H2O = L-glutamate + NH4(+). It functions in the pathway cofactor biosynthesis; pyridoxal 5'-phosphate biosynthesis. Catalyzes the hydrolysis of glutamine to glutamate and ammonia as part of the biosynthesis of pyridoxal 5'-phosphate. The resulting ammonia molecule is channeled to the active site of PdxS. This Listeria monocytogenes serotype 4a (strain HCC23) protein is Pyridoxal 5'-phosphate synthase subunit PdxT.